Reading from the N-terminus, the 508-residue chain is Sugar transport protein 12 (508 aa).

Topologically, residues Met1–Tyr22 are cytoplasmic. The next 12 membrane-spanning stretches (helical) occupy residues Val23 to Ile43, Val80 to Ala100, Val118 to Val138, Leu141 to Met161, Ile172 to Phe192, Leu201 to Pro221, Leu294 to Gly314, Ala317 to Ile337, Phe347 to Ile367, Trp383 to Trp403, Ile426 to Leu446, and Phe451 to Phe471. Over Leu472–Ile508 the chain is Cytoplasmic.

This sequence belongs to the major facilitator superfamily. Sugar transporter (TC 2.A.1.1) family.

It is found in the membrane. Its function is as follows. Mediates an active uptake of hexoses, probably by sugar/hydrogen symport. This Arabidopsis thaliana (Mouse-ear cress) protein is Sugar transport protein 12 (STP12).